We begin with the raw amino-acid sequence, 496 residues long: L-arabinose isomerase (496 aa).

Mn(2+) contacts are provided by E302, E329, H346, and H445.

Belongs to the arabinose isomerase family. Mn(2+) serves as cofactor.

It carries out the reaction beta-L-arabinopyranose = L-ribulose. The protein operates within carbohydrate degradation; L-arabinose degradation via L-ribulose; D-xylulose 5-phosphate from L-arabinose (bacterial route): step 1/3. In terms of biological role, catalyzes the conversion of L-arabinose to L-ribulose. The polypeptide is L-arabinose isomerase (Thermotoga maritima (strain ATCC 43589 / DSM 3109 / JCM 10099 / NBRC 100826 / MSB8)).